Here is a 118-residue protein sequence, read N- to C-terminus: Protein Rev (118 aa).

S5 bears the Phosphoserine; by host CK2 mark. The segment at 18–26 (LIKILYQSN) is homomultimerization. The interval 23-49 (YQSNPPPSPEGTRQARRNRRRRWRARQ) is disordered. Residues 34–50 (TRQARRNRRRRWRARQR) carry the Nuclear localization signal and RNA-binding (RRE) motif. The span at 36-49 (QARRNRRRRWRARQ) shows a compositional bias: basic residues. Positions 73-84 (LQLPPLERLNLN) match the Nuclear export signal and binding to XPO1 motif. Residues 89–118 (CGASGTQGVGSPQISVESPTVLESGTEEQC) form a disordered region. Phosphoserine; by host occurs at positions 92 and 99. Residues 92 to 112 (SGTQGVGSPQISVESPTVLES) show a composition bias toward polar residues.

The protein belongs to the HIV-1 REV protein family. Homomultimer; when bound to the RRE. Multimeric assembly is essential for activity and may involve XPO1. Binds to human KPNB1, XPO1, TNPO1, RANBP5 and IPO7. Interacts with the viral Integrase. Interacts with human KHDRBS1. Interacts with human NAP1; this interaction decreases Rev multimerization and stimulates its activity. Interacts with human DEAD-box helicases DDX3 and DDX24; these interactions may serve for viral RNA export to the cytoplasm and packaging, respectively. Interacts with human PSIP1; this interaction may inhibit HIV-1 DNA integration by promoting dissociation of the Integrase-LEDGF/p75 complex. Asymmetrically arginine dimethylated at one site by host PRMT6. Methylation impairs the RNA-binding activity and export of viral RNA from the nucleus to the cytoplasm. Post-translationally, phosphorylated by protein kinase CK2. Presence of, and maybe binding to the N-terminus of the regulatory beta subunit of CK2 is necessary for CK2-mediated Rev's phosphorylation.

It localises to the host nucleus. The protein resides in the host nucleolus. It is found in the host cytoplasm. Its function is as follows. Escorts unspliced or incompletely spliced viral pre-mRNAs (late transcripts) out of the nucleus of infected cells. These pre-mRNAs carry a recognition sequence called Rev responsive element (RRE) located in the env gene, that is not present in fully spliced viral mRNAs (early transcripts). This function is essential since most viral proteins are translated from unspliced or partially spliced pre-mRNAs which cannot exit the nucleus by the pathway used by fully processed cellular mRNAs. Rev itself is translated from a fully spliced mRNA that readily exits the nucleus. Rev's nuclear localization signal (NLS) binds directly to KPNB1/Importin beta-1 without previous binding to KPNA1/Importin alpha-1. KPNB1 binds to the GDP bound form of RAN (Ran-GDP) and targets Rev to the nucleus. In the nucleus, the conversion from Ran-GDP to Ran-GTP dissociates Rev from KPNB1 and allows Rev's binding to the RRE in viral pre-mRNAs. Rev multimerization on the RRE via cooperative assembly exposes its nuclear export signal (NES) to the surface. Rev can then form a complex with XPO1/CRM1 and Ran-GTP, leading to nuclear export of the complex. Conversion from Ran-GTP to Ran-GDP mediates dissociation of the Rev/RRE/XPO1/RAN complex, so that Rev can return to the nucleus for a subsequent round of export. Beside KPNB1, also seems to interact with TNPO1/Transportin-1, RANBP5/IPO5 and IPO7/RANBP7 for nuclear import. The nucleoporin-like HRB/RIP is an essential cofactor that probably indirectly interacts with Rev to release HIV RNAs from the perinuclear region to the cytoplasm. The sequence is that of Protein Rev from Human immunodeficiency virus type 1 group M subtype D (isolate Z2/CDC-Z34) (HIV-1).